We begin with the raw amino-acid sequence, 308 residues long: V-type immunoglobulin domain-containing suppressor of T-cell activation (308 aa).

An N-terminal signal peptide occupies residues 1 to 32 (MGVPAVPEASSPRWGTLLLAIFLAASRGLVAA). The Ig-like V-type domain occupies 33 to 167 (FKVTTPYSLY…RFYGSMELQV (135 aa)). The Extracellular portion of the chain corresponds to 33–191 (FKVTTPYSLY…EQDSDSITAA (159 aa)). 3 N-linked (GlcNAc...) asparagine glycosylation sites follow: Asn49, Asn91, and Asn127. Residues Cys54 and Cys145 are joined by a disulfide bond. The helical transmembrane segment at 192–212 (ALATGACIVGILCLPLILLLV) threads the bilayer. Over 213 to 308 (YKQRQVASHR…VPDSPNSEAI (96 aa)) the chain is Cytoplasmic. The segment at 230–308 (MDSNTQGIEN…VPDSPNSEAI (79 aa)) is disordered. Ser232 is subject to Phosphoserine.

At the cell surface, may be cleaved by MMP14. In terms of processing, N-glycosylated. As to expression, expressed in spleen, thymus, bone marrow, lymph node, and in T-cells within the lamina propria of the small intestine. Detected on CD4+ and CD8+ T-cells, bone marrow-derived dendritic cells (BMDCs), peritoneal macrophages, neutrophils, and natural killer (NK) cells. In spleen and lymph nodes, highly expressed on CD4+ T-cell populations, and at lower levels on CD8+ T-cells. In thymus, has low expression on CD4+ cells and CD8+ cells, and not detected on CD4+CD8+ cells. Expressed in splenic and peritoneal CD11b cells. Not detected in most B cells and NK cells (at protein level). Also detected at lower levels in non-hematopoeitic tissues such as heart, brain, lung, kidney, muscle, ovary, and testis.

It localises to the cell membrane. In terms of biological role, immunoregulatory receptor which inhibits the T-cell response. May promote differentiation of embryonic stem cells, by inhibiting BMP4 signaling. May stimulate MMP14-mediated MMP2 activation. This is V-type immunoglobulin domain-containing suppressor of T-cell activation from Mus musculus (Mouse).